We begin with the raw amino-acid sequence, 755 residues long: PWWP domain-containing protein 2A (755 aa).

The segment covering 1–15 (MAAVAAEAAATAASP) has biased composition (low complexity). Residues 1-153 (MAAVAAEAAA…VPPAGGDSTV (153 aa)) are disordered. Over residues 64–76 (DEPPLPPPPPPPG) the composition is skewed to pro residues. Phosphoserine occurs at positions 81, 102, 116, and 119. The segment covering 112 to 126 (ELPPSPASPPEQPPA) has biased composition (pro residues). Residues 148–373 (GGDSTVSQLI…KLKTDHKVDG (226 aa)) are interaction with HDAC1 and MTA1. K208 is covalently cross-linked (Glycyl lysine isopeptide (Lys-Gly) (interchain with G-Cter in SUMO2)). Disordered stretches follow at residues 282 to 301 (YNQS…KRKM), 334 to 384 (KEIR…KRNA), 400 to 562 (KVSA…GSKN), and 578 to 626 (SSAS…SKEE). Residues 292 to 301 (RKIKRPKRKM) show a composition bias toward basic residues. Composition is skewed to basic and acidic residues over residues 346–356 (SKYEDKKRRNE) and 368–381 (DHKV…ESQK). Residues 403 to 421 (AQANTSKAQLSTKKVLQSK) are compositionally biased toward polar residues. Residues 422-444 (NMDHAKAREVLKIAKEKAQKKQN) are compositionally biased toward basic and acidic residues. Positions 423–574 (MDHAKAREVL…SVYMTLNQKK (152 aa)) are interaction with the H2A.Z/H2AZ1. Polar residues predominate over residues 508 to 527 (SRCTSTRSAGEAPSENQSPS). A compositionally biased stretch (low complexity) spans 593 to 603 (SSNSECSSSES). Residues 655–715 (VGDIVWAKIY…LSQLSPFLEN (61 aa)) enclose the PWWP domain.

Component of a MTA1-specific subcomplex of the NuRD complex (M1HR), composed of PWWP2A, MTA1/2, HDAC1/2, and RBBP4/7 but does not contain CHD4 and MBD3. Interacts with MTA1; the interaction mediates the association of PWWP2A with the M1HR complex. Interacts with H2A.Z/H2AZ1. Interacts (via PWWP domain) with histone H3 trimethylated at 'Lys-36' (H3K36me3). Does not interact with CHD4 and MBD3. In terms of assembly, interacts with MTA1 and with HDAC1 in a MTA1-dependent manner. Does not interact with CHD4 and MBD3.

The protein resides in the nucleus. Its function is as follows. Chromatin-binding protein that acts as an adapter between distinct nucleosome components (H3K36me3 or H2A.Z) and chromatin-modifying complexes, contributing to the regulation of the levels of histone acetylation at actively transcribed genes. Competes with CHD4 and MBD3 for interaction with MTA1 to form a NuRD subcomplex, preventing the formation of full NuRD complex (containing CHD4 and MBD3), leading to recruitment of HDACs to gene promoters resulting in turn in the deacetylation of nearby H3K27 and H2A.Z. Plays a role in facilitating transcriptional elongation and repression of spurious transcription initiation through regulation of histone acetylation. Essential for proper mitosis progression. The sequence is that of PWWP domain-containing protein 2A (PWWP2A) from Homo sapiens (Human).